A 283-amino-acid polypeptide reads, in one-letter code: Diaminopimelate epimerase (283 aa).

Positions 13, 46, and 66 each coordinate substrate. Cys75 acts as the Proton donor in catalysis. Residues 76–77 (GN), Asn166, Asn199, and 217–218 (ER) each bind substrate. Cys226 serves as the catalytic Proton acceptor. Residue 227–228 (GT) coordinates substrate.

The protein belongs to the diaminopimelate epimerase family. Homodimer.

It localises to the cytoplasm. The catalysed reaction is (2S,6S)-2,6-diaminopimelate = meso-2,6-diaminopimelate. The protein operates within amino-acid biosynthesis; L-lysine biosynthesis via DAP pathway; DL-2,6-diaminopimelate from LL-2,6-diaminopimelate: step 1/1. Catalyzes the stereoinversion of LL-2,6-diaminopimelate (L,L-DAP) to meso-diaminopimelate (meso-DAP), a precursor of L-lysine and an essential component of the bacterial peptidoglycan. This Herminiimonas arsenicoxydans protein is Diaminopimelate epimerase.